The sequence spans 549 residues: Calcium-dependent protein kinase 5 (549 aa).

Gly-2 is lipidated: N-myristoyl glycine. Residues 43–69 form a disordered region; that stretch reads DEPAGKKAPRGSAAAADAPHAASMKRG. The segment covering 52 to 64 has biased composition (low complexity); sequence RGSAAAADAPHAA. In terms of domain architecture, Protein kinase spans 92-350; that stretch reads YALGRKLGQG…AHEVLCHPWI (259 aa). Residues 98–106 and Lys-121 each bind ATP; that span reads LGQGQFGTT. Asp-216 serves as the catalytic Proton acceptor. An autoinhibitory domain region spans residues 356–386; sequence APDRPLDPAVLSRIKQFSAMNKLKKMALRVI. EF-hand domains lie at 393–428, 429–464, 465–500, and 501–534; these read EEIA…YGST, LKDT…LNKL, EREE…HNMP, and DAFL…GNMG. Ca(2+) is bound by residues Asp-406, Asp-408, Ser-410, Glu-417, Asp-442, Asp-444, Ser-446, Thr-448, Glu-453, Asp-478, Asp-480, Ser-482, Tyr-484, Glu-489, Asp-512, Asp-514, Asp-516, Arg-518, and Glu-523.

The protein belongs to the protein kinase superfamily. Ser/Thr protein kinase family. CDPK subfamily.

It is found in the membrane. The catalysed reaction is L-seryl-[protein] + ATP = O-phospho-L-seryl-[protein] + ADP + H(+). It carries out the reaction L-threonyl-[protein] + ATP = O-phospho-L-threonyl-[protein] + ADP + H(+). With respect to regulation, activated by calcium. Autophosphorylation may play an important role in the regulation of the kinase activity. Functionally, may play a role in signal transduction pathways that involve calcium as a second messenger. The chain is Calcium-dependent protein kinase 5 from Oryza sativa subsp. japonica (Rice).